The sequence spans 134 residues: MSWQTYVDDHLMCELEGNPGHHLSAAAILGQDGSVWAQSSAFPQFKPEEINGITTDFNEPGHLAPTGLHLGGAKYMVIAGEPGAVIRGKKGAGGITIKKTGQALVFGLYEEPVTPGQCNMVVERLGDYLLEQGL.

A disulfide bond links Cys-13 and Cys-118. Positions 84-100 match the Involved in PIP2 interaction motif; that stretch reads AVIRGKKGAGGITIKKT. The residue at position 114 (Thr-114) is a Phosphothreonine.

It belongs to the profilin family. Occurs in many kinds of cells as a complex with monomeric actin in a 1:1 ratio. In terms of processing, phosphorylated by MAP kinases.

It localises to the cytoplasm. Its subcellular location is the cytoskeleton. Its function is as follows. Binds to actin and affects the structure of the cytoskeleton. At high concentrations, profilin prevents the polymerization of actin, whereas it enhances it at low concentrations. The chain is Profilin-2 from Olea europaea (Common olive).